Here is a 587-residue protein sequence, read N- to C-terminus: Ankyrin repeat and SOCS box protein 14 (587 aa).

ANK repeat units follow at residues 81–110 (NGWL…PSTW), 116–145 (NGET…NPNA), 149–178 (EGNS…DVNL), 182–211 (NERT…YPDA), 215–244 (YGFT…DVHS), 248–277 (DSSS…DANI), 281–310 (SGHL…IAAI), 313–342 (SGIS…DVNF), 355–384 (QRKS…LPNQ), 385–414 (DPVN…NVNY), and 416–449 (CRVN…DTER). The region spanning 521-576 (WPEIHFILANPRSLQHLCRLKIRKCMGRLRLRCPVFMSFLPLPNLLKAYVLYKEYD) is the SOCS box domain.

The protein belongs to the ankyrin SOCS box (ASB) family. In terms of assembly, interacts with MAPRE2; this interaction promotes MAPRE2 degradation.

It functions in the pathway protein modification; protein ubiquitination. In terms of biological role, may be a substrate-recognition component of a SCF-like ECS (Elongin-Cullin-SOCS-box protein) E3 ubiquitin-protein ligase complex which mediates the ubiquitination and subsequent proteasomal degradation of target proteins. Plays a role in the inhibition of cardiomyocyte nuclear proliferation by mediating the ubiquitination and degradation of MAPRE2. This chain is Ankyrin repeat and SOCS box protein 14 (Asb14), found in Mus musculus (Mouse).